The following is a 491-amino-acid chain: UDP-N-acetylmuramate--L-alanine ligase (491 aa).

126 to 132 (GTHGKTT) is a binding site for ATP.

Belongs to the MurCDEF family.

It localises to the cytoplasm. It carries out the reaction UDP-N-acetyl-alpha-D-muramate + L-alanine + ATP = UDP-N-acetyl-alpha-D-muramoyl-L-alanine + ADP + phosphate + H(+). It functions in the pathway cell wall biogenesis; peptidoglycan biosynthesis. Its function is as follows. Cell wall formation. This chain is UDP-N-acetylmuramate--L-alanine ligase, found in Salmonella agona (strain SL483).